Consider the following 1249-residue polypeptide: Cell adhesion molecule-related/down-regulated by oncogenes (1249 aa).

Residues 1 to 25 form the signal peptide; sequence MHSDPGPWHPLLCFLVLALSTSANS. The Extracellular segment spans residues 26 to 957; the sequence is DVTPRFTSKP…PSHSPTRNGD (932 aa). 5 consecutive Ig-like C2-type domains span residues 29–113, 120–212, 217–307, 314–400, and 406–517; these read PRFT…KSVS, NDFE…LKLS, PRVD…VYYT, PSVS…ATVH, and PVIV…AYLT. 3 disulfides stabilise this stretch: C50–C98, C142–C192, and C244–C292. N-linked (GlcNAc...) asparagine glycosylation is found at N181, N289, N296, N344, and N428. Intrachain disulfides connect C335–C382 and C427–C501. Disordered regions lie at residues 528–585 and 671–690; these read EDIT…SPPQ and TSKE…PPIG. Positions 545 to 566 are enriched in basic and acidic residues; it reads SETRVPDHSQINEHKPEPRVTE. Fibronectin type-III domains are found at residues 577–675, 721–815, and 826–923; these read APII…SKER, APDR…VAGY, and GPRI…TKAR. The N-linked (GlcNAc...) asparagine glycan is linked to N870. Residues 929 to 952 are disordered; the sequence is SEYPVLDLSTPSVPDRSSSPSHSP. Over residues 937-952 the composition is skewed to low complexity; the sequence is STPSVPDRSSSPSHSP. A helical transmembrane segment spans residues 958-978; that stretch reads FLYVIVGCVLGGMVLILLAFI. At 979–1249 the chain is on the cytoplasmic side; it reads AMCLLKNRQQ…DHPQLQTQEA (271 aa). The interval 1158–1202 is disordered; the sequence is NCSEEIEEDQNEKETQLSANSVCPEEATQTGTEQHEGEDCTKTED. The span at 1159-1168 shows a compositional bias: acidic residues; it reads CSEEIEEDQN. The segment covering 1173 to 1189 has biased composition (polar residues); that stretch reads QLSANSVCPEEATQTGT. The segment covering 1190–1202 has biased composition (basic and acidic residues); sequence EQHEGEDCTKTED.

The protein resides in the cell membrane. Its function is as follows. Component of a cell-surface receptor complex that mediates cell-cell interactions between muscle precursor cells. Promotes differentiation of myogenic cells. This chain is Cell adhesion molecule-related/down-regulated by oncogenes (cdon), found in Xenopus laevis (African clawed frog).